The primary structure comprises 95 residues: Beta-defensin 132 (95 aa).

The signal sequence occupies residues 1-22 (MKFLLLVLAALGFLTQVIPASA). 3 cysteine pairs are disulfide-bonded: Cys-27-Cys-55, Cys-35-Cys-49, and Cys-39-Cys-56. Positions 74–95 (HWQSRRRNTQRKDKKQQTTVTS) are disordered. Residues 76-87 (QSRRRNTQRKDK) are compositionally biased toward basic residues.

The protein belongs to the beta-defensin family.

It is found in the secreted. Functionally, has antibacterial activity. This Homo sapiens (Human) protein is Beta-defensin 132 (DEFB132).